Here is a 21-residue protein sequence, read N- to C-terminus: thr operon leader peptide (21 aa).

Belongs to the thr operon leader peptide family.

Its function is as follows. This protein is involved in control of the biosynthesis of threonine. In Salmonella choleraesuis (strain SC-B67), this protein is thr operon leader peptide.